Here is a 787-residue protein sequence, read N- to C-terminus: MPRKTLLPLVPACDAAPRRKRLAAALLAVPGLVPAVSQAQLSGAAAEPQTFGSPWDLRLAPQLDEHPQKQGGKPATFVLADHTGGTADQDLAAKGSAEIRRGNAVVKADAIHYDQDTDMADAYGKVTVANGGTTFSGPEAHLKVEANQGFMTTPKYHFTATGGSGSAERVQLLDSERSVFTNGTYTGCQCSTNPAWYIRGSEFDFDTGADEGVARNGVLFFQGVPLFGSPWLTFPLSGERRSGFLPPTFSPFSSTNGIEVSLPYYFNIAPNRDLTITPHIISKRGIFTQATFRYLSTNYSGALTGEYLPDDRIAHRNRYAIFWQHQQNFGNGFGGYIYYNKVSDNLYPEELGSTNQFVNGIQTVYQQEAGLTYNDGPWSVLGRYQHWQTLPPAVAPYGREPQLNVKYAKYNVGGFDFGAEADYSRFRITTADQPEGDRVMFNPYVSYGLYGPGYFFVPKAQLHIASYDLTTTTGGVPDQAKRFTYSIPTLSLDTGLVFDRSVRLFGQDYIQTLEPRLFYVYTPYRNQSNAPLFDTAVSDFGLAEIFTPNTFVGNDRIADANRLTAALTTRFINPATGDERARFVIAQQYYFTDQRVTLLPTEAPATARHSDLILGASVKLGAGFASETAFQYNVDNNQLVKSSVGFGYSPGERRVINVGYRYTRQNPTLSNEPINQILMSAQWPLTRRLYAVGRLNYDLASSRVVDGLVGFQYDADCWAFGVGVQRYANGLNTSGQQNSSTRVLAQLVLKGLTSIDNGLVTAFRAGVQGYTPLPPAPAPLSRFSNYD.

Positions 1–39 (MPRKTLLPLVPACDAAPRRKRLAAALLAVPGLVPAVSQA) are cleaved as a signal peptide.

This sequence belongs to the LptD family. Component of the lipopolysaccharide transport and assembly complex. Interacts with LptE and LptA.

It is found in the cell outer membrane. In terms of biological role, together with LptE, is involved in the assembly of lipopolysaccharide (LPS) at the surface of the outer membrane. This Burkholderia thailandensis (strain ATCC 700388 / DSM 13276 / CCUG 48851 / CIP 106301 / E264) protein is LPS-assembly protein LptD.